Consider the following 188-residue polypeptide: Adenine phosphoribosyltransferase (188 aa).

This sequence belongs to the purine/pyrimidine phosphoribosyltransferase family. As to quaternary structure, homodimer.

It localises to the cytoplasm. The catalysed reaction is AMP + diphosphate = 5-phospho-alpha-D-ribose 1-diphosphate + adenine. Its pathway is purine metabolism; AMP biosynthesis via salvage pathway; AMP from adenine: step 1/1. In terms of biological role, catalyzes a salvage reaction resulting in the formation of AMP, that is energically less costly than de novo synthesis. This Burkholderia lata (strain ATCC 17760 / DSM 23089 / LMG 22485 / NCIMB 9086 / R18194 / 383) protein is Adenine phosphoribosyltransferase.